Consider the following 213-residue polypeptide: Uracil phosphoribosyltransferase (213 aa).

Residues Arg-77, Arg-102, and 129–137 contribute to the 5-phospho-alpha-D-ribose 1-diphosphate site; that span reads DPMLATGGS. Residues Ile-198 and 203–205 contribute to the uracil site; that span reads GDA. Asp-204 provides a ligand contact to 5-phospho-alpha-D-ribose 1-diphosphate.

The protein belongs to the UPRTase family. Mg(2+) serves as cofactor.

The catalysed reaction is UMP + diphosphate = 5-phospho-alpha-D-ribose 1-diphosphate + uracil. It participates in pyrimidine metabolism; UMP biosynthesis via salvage pathway; UMP from uracil: step 1/1. With respect to regulation, allosterically activated by GTP. Functionally, catalyzes the conversion of uracil and 5-phospho-alpha-D-ribose 1-diphosphate (PRPP) to UMP and diphosphate. The chain is Uracil phosphoribosyltransferase from Mycobacteroides abscessus (strain ATCC 19977 / DSM 44196 / CCUG 20993 / CIP 104536 / JCM 13569 / NCTC 13031 / TMC 1543 / L948) (Mycobacterium abscessus).